Consider the following 120-residue polypeptide: NAD(P)H-quinone oxidoreductase subunit 3, chloroplastic (120 aa).

A run of 3 helical transmembrane segments spans residues 9–29 (FFWA…LISG), 64–84 (MFAL…PWAM), and 88–108 (VLGV…IIGL).

The protein belongs to the complex I subunit 3 family. In terms of assembly, NDH is composed of at least 16 different subunits, 5 of which are encoded in the nucleus.

The protein resides in the plastid. Its subcellular location is the chloroplast thylakoid membrane. The enzyme catalyses a plastoquinone + NADH + (n+1) H(+)(in) = a plastoquinol + NAD(+) + n H(+)(out). The catalysed reaction is a plastoquinone + NADPH + (n+1) H(+)(in) = a plastoquinol + NADP(+) + n H(+)(out). Functionally, NDH shuttles electrons from NAD(P)H:plastoquinone, via FMN and iron-sulfur (Fe-S) centers, to quinones in the photosynthetic chain and possibly in a chloroplast respiratory chain. The immediate electron acceptor for the enzyme in this species is believed to be plastoquinone. Couples the redox reaction to proton translocation, and thus conserves the redox energy in a proton gradient. In Nicotiana tabacum (Common tobacco), this protein is NAD(P)H-quinone oxidoreductase subunit 3, chloroplastic.